We begin with the raw amino-acid sequence, 256 residues long: Hydroxyacylglutathione hydrolase (256 aa).

Zn(2+) is bound by residues His-56, His-58, Asp-60, His-61, His-114, Asp-133, and His-171.

The protein belongs to the metallo-beta-lactamase superfamily. Glyoxalase II family. In terms of assembly, monomer. The cofactor is Zn(2+).

The catalysed reaction is an S-(2-hydroxyacyl)glutathione + H2O = a 2-hydroxy carboxylate + glutathione + H(+). It functions in the pathway secondary metabolite metabolism; methylglyoxal degradation; (R)-lactate from methylglyoxal: step 2/2. In terms of biological role, thiolesterase that catalyzes the hydrolysis of S-D-lactoyl-glutathione to form glutathione and D-lactic acid. This chain is Hydroxyacylglutathione hydrolase, found in Rhodobacter capsulatus (Rhodopseudomonas capsulata).